The sequence spans 187 residues: T-cell receptor-associated transmembrane adapter 1 (187 aa).

Residues 1–7 (MSGSSGC) are Extracellular-facing. A helical; Signal-anchor for type III membrane protein transmembrane segment spans residues 8–28 (PFFLWGLLAFLGLALVISLIF). At 29–187 (NISHYVEKQR…LIRAKREPVI (159 aa)) the chain is on the cytoplasmic side. Serine 46 is modified (phosphoserine). A Phosphotyrosine modification is found at tyrosine 80. An interaction with PIK3R1 region spans residues 80 to 83 (YEQM). A disordered region spans residues 117–138 (SVKGKRRRPRKQNTNVSDRGKD).

In terms of assembly, homodimer; disulfide-linked. Interacts with CD3Z. When phosphorylated, interacts with PIK3R1. Post-translationally, phosphorylated on tyrosines upon TCR activation. Present in T-cells (at protein level).

It is found in the cell membrane. Its function is as follows. Stabilizes the TCR (T-cell antigen receptor)/CD3 complex at the surface of T-cells. This Mus musculus (Mouse) protein is T-cell receptor-associated transmembrane adapter 1 (Trat1).